We begin with the raw amino-acid sequence, 207 residues long: Dephospho-CoA kinase (207 aa).

The 198-residue stretch at Ile-10–Ser-207 folds into the DPCK domain. Gly-18–Ala-23 provides a ligand contact to ATP.

This sequence belongs to the CoaE family.

Its subcellular location is the cytoplasm. It catalyses the reaction 3'-dephospho-CoA + ATP = ADP + CoA + H(+). It participates in cofactor biosynthesis; coenzyme A biosynthesis; CoA from (R)-pantothenate: step 5/5. Its function is as follows. Catalyzes the phosphorylation of the 3'-hydroxyl group of dephosphocoenzyme A to form coenzyme A. The sequence is that of Dephospho-CoA kinase from Pseudomonas savastanoi pv. phaseolicola (strain 1448A / Race 6) (Pseudomonas syringae pv. phaseolicola (strain 1448A / Race 6)).